The chain runs to 513 residues: Keratin, type II cuticular Hb2 (513 aa).

The segment at 1-120 (MSYHSFQPGS…PTVQRVKRDE (120 aa)) is head. One can recognise an IF rod domain in the interval 120 to 431 (EKEQIKCLNN…RLLEGEEHRL (312 aa)). The segment at 121 to 155 (KEQIKCLNNRFASFINKVRFLEQKNKLLETKWNFM) is coil 1A. The interval 156-165 (QQQRCCQTNI) is linker 1. The coil 1B stretch occupies residues 166–266 (EPIFEGYISA…YEEEICLLQS (101 aa)). The linker 12 stretch occupies residues 267–283 (QISETSVIVKMDNSREL). The coil 2 stretch occupies residues 284-427 (DVDGIIAEIK…ATYRRLLEGE (144 aa)). Residues 428-513 (EHRLCEGIGP…AGGSSPSHKH (86 aa)) are tail.

The protein belongs to the intermediate filament family. Heterotetramer of two type I and two type II keratins.

The sequence is that of Keratin, type II cuticular Hb2 (KRT82) from Homo sapiens (Human).